A 293-amino-acid polypeptide reads, in one-letter code: MATGAVLPRLLGAGVRAAPRGRAAQRGRTLGSAAAAAAREPERDSDRSARILSEPLKHSDFFNVKELFSVRSLFNARVHLGHKAGCRHRFMEPYIFGSRLGQDIIDLEQTATHLQLALNFTAHVAFRGGIILFVSRARQFSHLIESTARSCGEYAHTRYFKGGLLTNAPLLLGARVRLPDLIIFLHTLNNVFEPHVAVRDAAKMSIPTVGVVDTNCNPCLITYPVPGNDDSPPAVQLFCQLFQTAVTRAKEKRRQLEALYRLQGAPGPHPANPAAPGAPSPGAQAQLGMGHSP.

The segment covering 21–38 (GRAAQRGRTLGSAAAAAA) has biased composition (low complexity). 2 disordered regions span residues 21–49 (GRAA…DRSA) and 263–293 (QGAP…GHSP). A compositionally biased stretch (basic and acidic residues) spans 39-49 (REPERDSDRSA). Over residues 267–279 (GPHPANPAAPGAP) the composition is skewed to pro residues.

The protein belongs to the universal ribosomal protein uS2 family. As to quaternary structure, component of the mitochondrial ribosome small subunit (28S) which comprises a 12S rRNA and about 30 distinct proteins.

The protein localises to the mitochondrion. Functionally, required for mitoribosome formation and stability, and mitochondrial translation. In Bos taurus (Bovine), this protein is Small ribosomal subunit protein uS2m (MRPS2).